Reading from the N-terminus, the 364-residue chain is tRNA/tmRNA (uracil-C(5))-methyltransferase (364 aa).

S-adenosyl-L-methionine-binding residues include Q188, Y216, N221, E237, and D297. The active-site Nucleophile is the C322. E356 functions as the Proton acceptor in the catalytic mechanism.

The protein belongs to the class I-like SAM-binding methyltransferase superfamily. RNA M5U methyltransferase family. TrmA subfamily.

It catalyses the reaction uridine(54) in tRNA + S-adenosyl-L-methionine = 5-methyluridine(54) in tRNA + S-adenosyl-L-homocysteine + H(+). The enzyme catalyses uridine(341) in tmRNA + S-adenosyl-L-methionine = 5-methyluridine(341) in tmRNA + S-adenosyl-L-homocysteine + H(+). Functionally, dual-specificity methyltransferase that catalyzes the formation of 5-methyluridine at position 54 (m5U54) in all tRNAs, and that of position 341 (m5U341) in tmRNA (transfer-mRNA). The polypeptide is tRNA/tmRNA (uracil-C(5))-methyltransferase (Mannheimia succiniciproducens (strain KCTC 0769BP / MBEL55E)).